Here is a 660-residue protein sequence, read N- to C-terminus: MKAVIFAYHDMGCQGVQAVLDAGYEIAAIFTHADNPAENTFFGSVSRLAAGLGIPVYAPDNVNHPIWVDRIAELAPDIIFSFYYRNLLSEEILHLAPAGAFNLHGSLLPAYRGRAPLNWVLVNGESETGVTLHRMVKRADAGEIVASQRVAIAQDDVALTLHHKLCQAARQLLNSILPTMKCGDIPSVPQRESDATYYGRRRPEDGLIDWHKPVSTVHNLVRAVAAPWPGAFSYNGSQKFTIWSSRICPDAQGVLPGSVISVSPLRVACADGALEIITGQAGDGITVQGSQLAQTLGLVAGARLNRPPATSGKRRIRVLILGVNGFIGNHLTERLLNEENYEVYGMDIGSNAISRFLLHPRFHFVEGDISIHSEWIEYHVKKCDVVLPLVAIATPIEYTRNPLRVFELDFEENLRIIRYCVKYRKRVVFPSTSEVYGMCTDASFDEDKSNLIVGPVNKPRWIYSVSKQLLDRVIWAYGEKEGLRFTLFRPFNWMGPRLDSLNAARIGSSRAITQLILNLVEGTPIKLIDGGQQKRCFTDIRDGIEALFRIIVNEGDRCDGKIINIGNPDNEASIQELATLLLDSFDKHPLRCHFPPFAGFQVVESRSYYGKGYQDVAHRKPSIDNARRCLGWEPSIAMRDTVEETLDFFLRSVDVAERAS.

A formyltransferase ArnAFT region spans residues 1 to 304 (MKAVIFAYHD…TLGLVAGARL (304 aa)). The active-site Proton donor; for formyltransferase activity is the H104. Residues R114 and 136 to 140 (VKRAD) contribute to the (6R)-10-formyltetrahydrofolate site. A dehydrogenase ArnADH region spans residues 314-660 (RRIRVLILGV…RSVDVAERAS (347 aa)). NAD(+)-binding positions include D347 and 368 to 369 (DI). UDP-alpha-D-glucuronate-binding positions include A393, Y398, and 432 to 433 (TS). Catalysis depends on E434, which acts as the Proton acceptor; for decarboxylase activity. Residues R460, N492, 526-535 (KLIDGGQQKR), and Y613 each bind UDP-alpha-D-glucuronate. R619 (proton donor; for decarboxylase activity) is an active-site residue.

It in the N-terminal section; belongs to the Fmt family. UDP-L-Ara4N formyltransferase subfamily. This sequence in the C-terminal section; belongs to the NAD(P)-dependent epimerase/dehydratase family. UDP-glucuronic acid decarboxylase subfamily. Homohexamer, formed by a dimer of trimers.

The enzyme catalyses UDP-alpha-D-glucuronate + NAD(+) = UDP-beta-L-threo-pentopyranos-4-ulose + CO2 + NADH. The catalysed reaction is UDP-4-amino-4-deoxy-beta-L-arabinose + (6R)-10-formyltetrahydrofolate = UDP-4-deoxy-4-formamido-beta-L-arabinose + (6S)-5,6,7,8-tetrahydrofolate + H(+). Its pathway is nucleotide-sugar biosynthesis; UDP-4-deoxy-4-formamido-beta-L-arabinose biosynthesis; UDP-4-deoxy-4-formamido-beta-L-arabinose from UDP-alpha-D-glucuronate: step 1/3. It functions in the pathway nucleotide-sugar biosynthesis; UDP-4-deoxy-4-formamido-beta-L-arabinose biosynthesis; UDP-4-deoxy-4-formamido-beta-L-arabinose from UDP-alpha-D-glucuronate: step 3/3. The protein operates within bacterial outer membrane biogenesis; lipopolysaccharide biosynthesis. Functionally, bifunctional enzyme that catalyzes the oxidative decarboxylation of UDP-glucuronic acid (UDP-GlcUA) to UDP-4-keto-arabinose (UDP-Ara4O) and the addition of a formyl group to UDP-4-amino-4-deoxy-L-arabinose (UDP-L-Ara4N) to form UDP-L-4-formamido-arabinose (UDP-L-Ara4FN). The modified arabinose is attached to lipid A and is required for resistance to polymyxin and cationic antimicrobial peptides. The sequence is that of Bifunctional polymyxin resistance protein ArnA from Salmonella paratyphi C (strain RKS4594).